We begin with the raw amino-acid sequence, 764 residues long: Thyrotropin receptor (764 aa).

The signal sequence occupies residues 1–21; it reads MSLTPLLQLALLLALPRSLRG. At 22–413 the chain is on the extracellular side; sequence KGCPSPPCEC…EFNPCEDIMG (392 aa). A disulfide bond links Cys31 and Cys41. Residues Asn77 and Asn99 are each glycosylated (N-linked (GlcNAc...) asparagine). 6 LRR repeats span residues 125 to 150, 151 to 174, 176 to 199, 201 to 223, 225 to 248, and 250 to 271; these read LPLLKFLGIFNTGLRIFPDLTKVYST, DVFFILEITDNPYMTSIPANAFQG, CNETLTLKLYNNGFTSVQGHAFNG, KLDAVYLNKNKYLTVIDKDAFGG, FSGPTLLDVSYTSVTALPPKGLEH, and KELIARNTWTLKKLPLSLSFLH. 2 N-linked (GlcNAc...) asparagine glycosylation sites follow: Asn177 and Asn198. The N-linked (GlcNAc...) asparagine glycan is linked to Asn302. Tyr385 is modified (sulfotyrosine). Residues 414–441 form a helical membrane-spanning segment; that stretch reads YRFLRIVVWFVSLLALLGNVFVLVILLT. At 442–450 the chain is on the cytoplasmic side; the sequence is SHYKLTVPR. A helical membrane pass occupies residues 451–473; sequence FLMCNLAFADFCMGMYLLLIASV. Over 474–494 the chain is Extracellular; that stretch reads DLYTQSEYYNHAIDWQTGPGC. Cys494 and Cys569 are oxidised to a cystine. The chain crosses the membrane as a helical span at residues 495–517; sequence NTAGFFTVFASELSVYTLTVITL. Topologically, residues 518 to 537 are cytoplasmic; sequence ERWYAITFAMRLDRKIRLRH. The chain crosses the membrane as a helical span at residues 538-560; it reads AYAIMAGGWVCCFLLALLPLVGI. At 561–580 the chain is on the extracellular side; the sequence is SSYAKVSICLPMDTETPLAL. The chain crosses the membrane as a helical span at residues 581-602; sequence AYIILVLLLNIVAFTIVCSCYV. Residues 603 to 625 are Cytoplasmic-facing; the sequence is KIYITVRNPQYNPGDKDTKIAKR. A helical transmembrane segment spans residues 626 to 649; that stretch reads MAVLIFTDFMCMAPISFYALSALM. Over 650–660 the chain is Extracellular; the sequence is NKPLITVTNSK. Residues 661 to 682 traverse the membrane as a helical segment; sequence ILLVLFYPLNSCANPFLYAIFT. Topologically, residues 683–764 are cytoplasmic; the sequence is KAFQRDVFIL…ISKEYKQPVL (82 aa). A PDZ-binding motif is present at residues 762 to 764; sequence PVL.

It belongs to the G-protein coupled receptor 1 family. FSH/LSH/TSH subfamily. In terms of assembly, interacts with heterodimer GPHA2:GPHB5; this interaction stimulates cAMP production. Interacts (via the PDZ-binding motif) with SCRIB; regulates TSHR trafficking and function. Post-translationally, glycosylated. Sulfated. Sulfation on Tyr-385 plays a role in thyrotropin receptor binding and activation. Expressed in thyroide cells (at protein level).

Its subcellular location is the cell membrane. It localises to the basolateral cell membrane. Receptor for the thyroid-stimulating hormone (TSH) or thyrotropin. Also acts as a receptor for the heterodimeric glycoprotein hormone (GPHA2:GPHB5) or thyrostimulin. The activity of this receptor is mediated by G proteins which activate adenylate cyclase. Plays a central role in controlling thyroid cell metabolism. The chain is Thyrotropin receptor (TSHR) from Sus scrofa (Pig).